A 192-amino-acid chain; its full sequence is Dynein axonemal light chain 1 (192 aa).

4 LRR repeats span residues Asn49–Lys70, Tyr71–Gly92, Thr94–Lys115, and Lys116–Gly137. In terms of domain architecture, LRRCT spans Asn150–Ser192.

The protein belongs to the dynein light chain LC1-type family. As to quaternary structure, interacts with DNAH5, a outer arm dynein heavy chain. Interacts with tubulin located within the A-tubule of the outer doublets in a ATP-independent manner.

It localises to the cytoplasm. The protein localises to the cytoskeleton. Its subcellular location is the cilium axoneme. Part of the multisubunit axonemal ATPase complexes that generate the force for cilia motility and govern beat frequency. Component of the outer arm dynein (ODA). May be involved in a mechanosensory feedback mechanism controlling ODA activity based on external conformational cues by tethering the outer arm dynein heavy chain (DNAH5) to the microtubule within the axoneme. This chain is Dynein axonemal light chain 1 (dnal1), found in Xenopus laevis (African clawed frog).